The primary structure comprises 519 residues: uncharacterized protein (519 aa).

Transmembrane regions (helical) follow at residues 19-39, 42-62, 87-107, 128-148, 179-199, 220-240, 270-290, 311-331, 345-365, 386-406, 413-433, 475-495, and 496-516; these read FSSS…AIAT, VLVS…DWQI, MNIV…TVSG, LLAA…SLAV, VMMP…GLLA, FYAI…FDIA, LILP…YTGA, VGTS…LLII, WIVG…AWTI, IPMQ…AFST, FGIM…ELLL, LPYA…VGFT, and YSGL…IFAV.

It is found in the cell membrane. This is an uncharacterized protein from Haemophilus influenzae (strain ATCC 51907 / DSM 11121 / KW20 / Rd).